Here is a 745-residue protein sequence, read N- to C-terminus: AMP deaminase 1 (745 aa).

At Thr-79 the chain carries Phosphothreonine. Ser-83 carries the post-translational modification Phosphoserine. Phosphotyrosine is present on Tyr-214. 2 residues coordinate Zn(2+): His-301 and His-303. Substrate contacts are provided by residues His-303 and 372–377; that span reads KFNDKY. Phosphoserine is present on Ser-439. His-570 serves as a coordination point for Zn(2+). Glu-573 provides a ligand contact to substrate. His-592 acts as the Proton acceptor in catalysis. Asp-647 lines the Zn(2+) pocket. 648–651 is a substrate binding site; the sequence is DPMQ.

This sequence belongs to the metallo-dependent hydrolases superfamily. Adenosine and AMP deaminases family. As to quaternary structure, homotetramer. Zn(2+) serves as cofactor.

The enzyme catalyses AMP + H2O + H(+) = IMP + NH4(+). Its pathway is purine metabolism; IMP biosynthesis via salvage pathway; IMP from AMP: step 1/1. Its function is as follows. AMP deaminase plays a critical role in energy metabolism. This Mus musculus (Mouse) protein is AMP deaminase 1.